The primary structure comprises 96 residues: Citrate lyase acyl carrier protein (96 aa).

Ser-14 is subject to O-(phosphoribosyl dephospho-coenzyme A)serine.

The protein belongs to the CitD family. In terms of assembly, oligomer with a subunit composition of (alpha,beta,gamma)6.

Its subcellular location is the cytoplasm. In terms of biological role, covalent carrier of the coenzyme of citrate lyase. The polypeptide is Citrate lyase acyl carrier protein (Lactiplantibacillus plantarum (strain ATCC BAA-793 / NCIMB 8826 / WCFS1) (Lactobacillus plantarum)).